Reading from the N-terminus, the 140-residue chain is Small ribosomal subunit protein uS19 (140 aa).

It belongs to the universal ribosomal protein uS19 family.

In terms of biological role, protein S19 forms a complex with S13 that binds strongly to the 16S ribosomal RNA. This Saccharolobus solfataricus (strain ATCC 35092 / DSM 1617 / JCM 11322 / P2) (Sulfolobus solfataricus) protein is Small ribosomal subunit protein uS19 (rps19).